The following is a 418-amino-acid chain: Voltage-gated ClC-type chloride channel ClcB (418 aa).

The next 10 helical transmembrane spans lie at 5-25, 54-74, 146-166, 168-188, 222-242, 258-278, 291-311, 316-336, 352-372, and 380-400; these read LLIA…FRHA, LLTP…WQKF, LWIA…PLAG, LFIA…PVII, ALII…LTLM, WQLA…PAVW, APPL…AVLA, GAPG…GMLY, LLLG…APIM, and MTGE…ASVI.

This sequence belongs to the chloride channel (TC 2.A.49) family. ClcB subfamily.

The protein resides in the cell inner membrane. Probably acts as an electrical shunt for an outwardly-directed proton pump that is linked to amino acid decarboxylation, as part of the extreme acid resistance (XAR) response. The chain is Voltage-gated ClC-type chloride channel ClcB from Escherichia coli (strain SMS-3-5 / SECEC).